The primary structure comprises 1416 residues: DNA-directed RNA polymerase subunit beta' (1416 aa).

The Zn(2+) site is built by Cys-71, Cys-73, Cys-86, and Cys-89. Positions 461, 463, and 465 each coordinate Mg(2+). Residues Cys-815, Cys-889, Cys-896, and Cys-899 each contribute to the Zn(2+) site.

The protein belongs to the RNA polymerase beta' chain family. As to quaternary structure, the RNAP catalytic core consists of 2 alpha, 1 beta, 1 beta' and 1 omega subunit. When a sigma factor is associated with the core the holoenzyme is formed, which can initiate transcription. The cofactor is Mg(2+). It depends on Zn(2+) as a cofactor.

The catalysed reaction is RNA(n) + a ribonucleoside 5'-triphosphate = RNA(n+1) + diphosphate. DNA-dependent RNA polymerase catalyzes the transcription of DNA into RNA using the four ribonucleoside triphosphates as substrates. This Haemophilus influenzae (strain PittEE) protein is DNA-directed RNA polymerase subunit beta'.